The primary structure comprises 748 residues: Meprin A subunit alpha (748 aa).

A signal peptide spans 1–20 (MLWTLPVCLLSLSFSAHIAA). Residues 21–66 (VSIQHLSTGHDHDDVDVGEQQKDISEINSAAGLNLFQGDILLPRTR) constitute a propeptide that is removed on maturation. The Peptidase M12A domain occupies 67 to 261 (NALRDPSSRW…TRLNRMYNCT (195 aa)). Topologically, residues 67 to 719 (NALRDPSSRW…RCQAMHVHGS (653 aa)) are extracellular. Cystine bridges form between Cys-108/Cys-260, Cys-129/Cys-148, and Cys-270/Cys-432. Asn-141 is a glycosylation site (N-linked (GlcNAc...) asparagine). Position 156 (His-156) interacts with Zn(2+). The active site involves Glu-157. 2 residues coordinate Zn(2+): His-160 and His-166. Residues Asn-223, Asn-259, Asn-319, Asn-441, and Asn-542 are each glycosylated (N-linked (GlcNAc...) asparagine). The MAM domain maps to 265–434 (TLLDHCAFEK…ITLTETPCPT (170 aa)). Residues 435–596 (GVWTIRNISQ…DDTLIIFVDF (162 aa)) enclose the MATH domain. The disordered stretch occupies residues 641–668 (LPRRLDQRQPSRPKRSVENTGPMEDHNW). The region spanning 672 to 712 (FRDPCDPNPCQNEGTCVNVKGMASCRCVSGHAFFYTGERCQ) is the EGF-like domain. 3 disulfide bridges follow: Cys-676/Cys-687, Cys-681/Cys-696, and Cys-698/Cys-711. A helical membrane pass occupies residues 720 to 739 (LLGLLIGCITALIFLTFITF). The Cytoplasmic segment spans residues 740 to 748 (SNTYQKLRQ).

Homotetramer consisting of disulfide-linked alpha subunits, homooligomer consisting of disulfide-linked alpha subunit homodimers, or heterotetramer of two alpha and two beta subunits formed by non-covalent association of two disulfide-linked heterodimers. Interacts with MBL2 through its carbohydrate moiety. This interaction may inhibit its catalytic activity. Zn(2+) is required as a cofactor. In terms of processing, N-glycosylated; contains GlcNAc, galactose, mannose and a small amount of fucose. As to expression, colocalized with E-24.11 in proximal tubules of juxtamedullary nephrons.

The protein localises to the membrane. The catalysed reaction is Hydrolysis of protein and peptide substrates preferentially on carboxyl side of hydrophobic residues.. Its activity is regulated as follows. Inhibited by actinonin. The protein is Meprin A subunit alpha (Mep1a) of Rattus norvegicus (Rat).